The following is a 351-amino-acid chain: Histidinol-phosphate aminotransferase 2 (351 aa).

Lysine 210 is modified (N6-(pyridoxal phosphate)lysine).

It belongs to the class-II pyridoxal-phosphate-dependent aminotransferase family. Histidinol-phosphate aminotransferase subfamily. In terms of assembly, homodimer. Pyridoxal 5'-phosphate serves as cofactor.

The enzyme catalyses L-histidinol phosphate + 2-oxoglutarate = 3-(imidazol-4-yl)-2-oxopropyl phosphate + L-glutamate. It functions in the pathway amino-acid biosynthesis; L-histidine biosynthesis; L-histidine from 5-phospho-alpha-D-ribose 1-diphosphate: step 7/9. The chain is Histidinol-phosphate aminotransferase 2 (hisC2) from Rhizobium meliloti (strain 1021) (Ensifer meliloti).